Consider the following 353-residue polypeptide: Nicotinate-nucleotide--dimethylbenzimidazole phosphoribosyltransferase (353 aa).

The active-site Proton acceptor is Glu-319.

It belongs to the CobT family.

The enzyme catalyses 5,6-dimethylbenzimidazole + nicotinate beta-D-ribonucleotide = alpha-ribazole 5'-phosphate + nicotinate + H(+). The protein operates within nucleoside biosynthesis; alpha-ribazole biosynthesis; alpha-ribazole from 5,6-dimethylbenzimidazole: step 1/2. In terms of biological role, catalyzes the synthesis of alpha-ribazole-5'-phosphate from nicotinate mononucleotide (NAMN) and 5,6-dimethylbenzimidazole (DMB). This Prosthecochloris aestuarii (strain DSM 271 / SK 413) protein is Nicotinate-nucleotide--dimethylbenzimidazole phosphoribosyltransferase.